Reading from the N-terminus, the 149-residue chain is uncharacterized protein (149 aa).

In terms of domain architecture, HotDog ACOT-type spans 16–128; that stretch reads PAGEPAIRVI…LFTFVAIDED (113 aa).

It belongs to the acyl coenzyme A hydrolase family.

This is an uncharacterized protein from Zymomonas mobilis subsp. mobilis (strain ATCC 31821 / ZM4 / CP4).